The sequence spans 320 residues: Cytochrome f (320 aa).

Positions 1 to 35 (MQTRNTFSWIREEITRSISVSLMIYIITWASISGA) are cleaved as a signal peptide. Positions 36, 56, 59, and 60 each coordinate heme. A helical membrane pass occupies residues 286 to 306 (VQGLLFFLGSVVLAQIFLVLK).

Belongs to the cytochrome f family. The 4 large subunits of the cytochrome b6-f complex are cytochrome b6, subunit IV (17 kDa polypeptide, petD), cytochrome f and the Rieske protein, while the 4 small subunits are PetG, PetL, PetM and PetN. The complex functions as a dimer. Requires heme as cofactor.

Its subcellular location is the plastid. It is found in the chloroplast thylakoid membrane. Its function is as follows. Component of the cytochrome b6-f complex, which mediates electron transfer between photosystem II (PSII) and photosystem I (PSI), cyclic electron flow around PSI, and state transitions. This is Cytochrome f from Capsella bursa-pastoris (Shepherd's purse).